The sequence spans 322 residues: Probable cell division protein WhiA (322 aa).

Residues 279-312 constitute a DNA-binding region (H-T-H motif); sequence SLKELGELWTPPVGKSGVNHRIRKIERLAEKLRS.

This sequence belongs to the WhiA family.

Involved in cell division and chromosome segregation. This Desulforamulus reducens (strain ATCC BAA-1160 / DSM 100696 / MI-1) (Desulfotomaculum reducens) protein is Probable cell division protein WhiA.